We begin with the raw amino-acid sequence, 81 residues long: Photosystem I iron-sulfur center (81 aa).

4Fe-4S ferredoxin-type domains are found at residues 2-31 (AHSVKIYDTCIGCTQCVRACPTDVLEMVPW) and 39-68 (IASAPRTEDCVGCKRCESACPTDFLSVRVY). The [4Fe-4S] cluster site is built by C11, C14, C17, C21, C48, C51, C54, and C58.

As to quaternary structure, the eukaryotic PSI reaction center is composed of at least 11 subunits. [4Fe-4S] cluster is required as a cofactor.

The protein localises to the plastid. The protein resides in the chloroplast thylakoid membrane. It carries out the reaction reduced [plastocyanin] + hnu + oxidized [2Fe-2S]-[ferredoxin] = oxidized [plastocyanin] + reduced [2Fe-2S]-[ferredoxin]. Apoprotein for the two 4Fe-4S centers FA and FB of photosystem I (PSI); essential for photochemical activity. FB is the terminal electron acceptor of PSI, donating electrons to ferredoxin. The C-terminus interacts with PsaA/B/D and helps assemble the protein into the PSI complex. Required for binding of PsaD and PsaE to PSI. PSI is a plastocyanin-ferredoxin oxidoreductase, converting photonic excitation into a charge separation, which transfers an electron from the donor P700 chlorophyll pair to the spectroscopically characterized acceptors A0, A1, FX, FA and FB in turn. This is Photosystem I iron-sulfur center from Physcomitrium patens (Spreading-leaved earth moss).